A 488-amino-acid chain; its full sequence is Prostaglandin E2 receptor EP4 subtype (488 aa).

Topologically, residues 1–19 are extracellular; that stretch reads MSTPGVNSSASLSPDRLNS. Asn7 carries N-linked (GlcNAc...) asparagine glycosylation. A helical transmembrane segment spans residues 20 to 43; sequence PVTIPAVMFIFGVVGNLVAIVVLC. Over 44 to 55 the chain is Cytoplasmic; sequence KSRKEQKETTFY. Residues 56–79 form a helical membrane-spanning segment; it reads TLVCGLAVTDLLGTLLVSPVTIAT. Over 80–96 the chain is Extracellular; the sequence is YMKGQWPGGQPLCEYST. Cysteines 92 and 170 form a disulfide. The chain crosses the membrane as a helical span at residues 97-115; it reads FILLFFSLSGLSIICAMSV. At 116 to 135 the chain is on the cytoplasmic side; it reads ERYLAINHAYFYSHYVDKRL. The chain crosses the membrane as a helical span at residues 136-160; it reads AGLTLFAVYASNVLFCALPNMGLGS. Over 161–184 the chain is Extracellular; the sequence is SRLQYPDTWCFIDWTTNVTAHAAY. The chain crosses the membrane as a helical span at residues 185-211; sequence SYMYAGFSSFLILATVLCNVLVCGALL. At 212–267 the chain is on the cytoplasmic side; it reads RMHRQFMRRTSLGTEQHHAAAAASVASRGHPAASPALPRLSDFRRRRSFRRIAGAE. Residues 268-295 form a helical membrane-spanning segment; that stretch reads IQMVILLIATSLVVLICSIPLVVRVFVN. The Extracellular portion of the chain corresponds to 296–312; sequence QLYQPSLEREVSKNPDL. Residues 313–332 form a helical membrane-spanning segment; sequence QAIRIASVNPILDPWIYILL. Residues 333–488 are Cytoplasmic-facing; the sequence is RKTVLSKAIE…ETLNLSEKCI (156 aa). The tract at residues 356-376 is disordered; that stretch reads RERSGQHCSDSQRTSSAMSGH. A compositionally biased stretch (polar residues) spans 361–376; it reads QHCSDSQRTSSAMSGH. Residues Ser374, Ser377, Ser379, and Ser382 each carry the phosphoserine modification. Over residues 437–449 the composition is skewed to polar residues; it reads SETSDSSQGQDSE. A disordered region spans residues 437-475; that stretch reads SETSDSSQGQDSESVLLVDEAGGSGRAGPAPKGSSLQVT.

This sequence belongs to the G-protein coupled receptor 1 family. In terms of assembly, interacts with FEM1A. In terms of processing, phosphorylation mediates agonist-mediated desensitization by promoting cytoplasmic retention. High in intestine and in peripheral blood mononuclear cells; low in lung, kidney, thymus, uterus, vasculature and brain. Not found in liver, heart, retina oe skeletal muscle.

The protein resides in the cell membrane. In terms of biological role, receptor for prostaglandin E2 (PGE2). The activity of this receptor is mediated by G(s) proteins that stimulate adenylate cyclase. Has a relaxing effect on smooth muscle. May play an important role in regulating renal hemodynamics, intestinal epithelial transport, adrenal aldosterone secretion, and uterine function. The protein is Prostaglandin E2 receptor EP4 subtype (PTGER4) of Homo sapiens (Human).